The following is a 234-amino-acid chain: Probable transcriptional regulatory protein Pfl01_3677 (234 aa).

It belongs to the TACO1 family.

It localises to the cytoplasm. The polypeptide is Probable transcriptional regulatory protein Pfl01_3677 (Pseudomonas fluorescens (strain Pf0-1)).